Consider the following 229-residue polypeptide: Ribose-5-phosphate isomerase A (229 aa).

Substrate-binding positions include 28–31 (TGST), 85–88 (DGAD), and 98–101 (KGRG). Glutamate 107 acts as the Proton acceptor in catalysis. Lysine 125 is a binding site for substrate.

This sequence belongs to the ribose 5-phosphate isomerase family. As to quaternary structure, homodimer.

It catalyses the reaction aldehydo-D-ribose 5-phosphate = D-ribulose 5-phosphate. It functions in the pathway carbohydrate degradation; pentose phosphate pathway; D-ribose 5-phosphate from D-ribulose 5-phosphate (non-oxidative stage): step 1/1. Catalyzes the reversible conversion of ribose-5-phosphate to ribulose 5-phosphate. The polypeptide is Ribose-5-phosphate isomerase A (Pyrococcus abyssi (strain GE5 / Orsay)).